The primary structure comprises 258 residues: Alpha-fibrinogenase albofibrase (258 aa).

The signal sequence occupies residues M1–A18. Positions Q19–L24 are excised as a propeptide. The Peptidase S1 domain occupies V25 to A249. Intrachain disulfides connect C31–C163, C50–C66, C98–C256, C142–C210, C174–C189, and C200–C225. N-linked (GlcNAc...) asparagine glycosylation occurs at N44. Active-site charge relay system residues include H65 and D110. Residue S204 is the Charge relay system of the active site.

The protein belongs to the peptidase S1 family. Snake venom subfamily. As to quaternary structure, monomer. As to expression, expressed by the venom gland.

It localises to the secreted. In terms of biological role, the recombinant protein has fibrinogenolytic activity against the Aalpha chain (FGA) of fibrinogen. Activates plasminogen (PLG) (is 4-fold less active than urokinase). Has weak thrombin-like enzyme activity. Has enzymatic activity against a trypsin-like substrate (S-3013) and shows a weaker activity on an activated protein C substrate (S-3125). This is Alpha-fibrinogenase albofibrase from Trimeresurus albolabris (White-lipped pit viper).